We begin with the raw amino-acid sequence, 343 residues long: Arginine-hydroxylase NDUFAF5, mitochondrial (343 aa).

Residues Met-1 to Val-29 constitute a mitochondrion transit peptide.

This sequence belongs to the methyltransferase superfamily. Interacts with NDUFAF8, leading to stabilize NDUFAF5. Interacts with NDUFS7. Interacts with PYURF (via TRM112 domain); the interaction is direct and stabilizes NDUFAF5 protein.

The protein resides in the mitochondrion inner membrane. Arginine hydroxylase that mediates hydroxylation of 'Arg-122' of NDUFS7 and is involved in the assembly of mitochondrial NADH:ubiquinone oxidoreductase complex (complex I, MT-ND1) at early stages. May also have methyltransferase activity. The sequence is that of Arginine-hydroxylase NDUFAF5, mitochondrial from Mus musculus (Mouse).